The primary structure comprises 620 residues: 1-deoxy-D-xylulose-5-phosphate synthase (620 aa).

Thiamine diphosphate contacts are provided by residues H80 and 121-123; that span reads GHS. D152 is a Mg(2+) binding site. Residues 153–154, N181, Y288, and E370 each bind thiamine diphosphate; that span reads GA. Residue N181 coordinates Mg(2+).

It belongs to the transketolase family. DXPS subfamily. In terms of assembly, homodimer. The cofactor is Mg(2+). It depends on thiamine diphosphate as a cofactor.

The enzyme catalyses D-glyceraldehyde 3-phosphate + pyruvate + H(+) = 1-deoxy-D-xylulose 5-phosphate + CO2. Its pathway is metabolic intermediate biosynthesis; 1-deoxy-D-xylulose 5-phosphate biosynthesis; 1-deoxy-D-xylulose 5-phosphate from D-glyceraldehyde 3-phosphate and pyruvate: step 1/1. In terms of biological role, catalyzes the acyloin condensation reaction between C atoms 2 and 3 of pyruvate and glyceraldehyde 3-phosphate to yield 1-deoxy-D-xylulose-5-phosphate (DXP). This chain is 1-deoxy-D-xylulose-5-phosphate synthase, found in Escherichia coli O6:K15:H31 (strain 536 / UPEC).